The following is a 420-amino-acid chain: Serine palmitoyltransferase (420 aa).

Over residues 1–21 (MKHNLQDNLQGEQMANTNSNG) the composition is skewed to polar residues. The tract at residues 1–25 (MKHNLQDNLQGEQMANTNSNGGKKP) is disordered. Residues 132-133 (GM), His233, Thr261, and Ser263 contribute to the pyridoxal 5'-phosphate site. Lys264 is modified (N6-(pyridoxal phosphate)lysine).

This sequence belongs to the class-II pyridoxal-phosphate-dependent aminotransferase family. Homodimer. Requires pyridoxal 5'-phosphate as cofactor.

The protein resides in the cytoplasm. The protein localises to the cell inner membrane. It catalyses the reaction L-serine + hexadecanoyl-CoA + H(+) = 3-oxosphinganine + CO2 + CoA. The protein operates within lipid metabolism; sphingolipid metabolism. Significantly inhibited by palmitoyl-CoA concentrations greater than 100 uM. Catalyzes the condensation of L-serine with palmitoyl-CoA (hexadecanoyl-CoA) to produce 3-oxosphinganine. The chain is Serine palmitoyltransferase from Bacteriovorax stolpii (Bdellovibrio stolpii).